A 151-amino-acid chain; its full sequence is Small ribosomal subunit protein uS11 (151 aa).

It belongs to the universal ribosomal protein uS11 family.

In Podocoryna carnea (Hydrozoan), this protein is Small ribosomal subunit protein uS11 (RPS14).